The sequence spans 329 residues: 4-hydroxythreonine-4-phosphate dehydrogenase (329 aa).

Residues His136 and Thr137 each contribute to the substrate site. A divalent metal cation-binding residues include His166, His211, and His266. Positions 274, 283, and 292 each coordinate substrate.

It belongs to the PdxA family. In terms of assembly, homodimer. Zn(2+) is required as a cofactor. Mg(2+) serves as cofactor. Requires Co(2+) as cofactor.

The protein localises to the cytoplasm. The catalysed reaction is 4-(phosphooxy)-L-threonine + NAD(+) = 3-amino-2-oxopropyl phosphate + CO2 + NADH. The protein operates within cofactor biosynthesis; pyridoxine 5'-phosphate biosynthesis; pyridoxine 5'-phosphate from D-erythrose 4-phosphate: step 4/5. Its function is as follows. Catalyzes the NAD(P)-dependent oxidation of 4-(phosphooxy)-L-threonine (HTP) into 2-amino-3-oxo-4-(phosphooxy)butyric acid which spontaneously decarboxylates to form 3-amino-2-oxopropyl phosphate (AHAP). In Escherichia fergusonii (strain ATCC 35469 / DSM 13698 / CCUG 18766 / IAM 14443 / JCM 21226 / LMG 7866 / NBRC 102419 / NCTC 12128 / CDC 0568-73), this protein is 4-hydroxythreonine-4-phosphate dehydrogenase.